Reading from the N-terminus, the 216-residue chain is Splicing factor U2AF 23 kDa subunit (216 aa).

A C3H1-type 1 zinc finger spans residues 12-40 (EQDKVNCSFYYKIGACRHGERCSRKHVKP). Positions 44–141 (QTILCPNMYK…RPVYAELSPV (98 aa)) constitute an RRM domain. Residues 143 to 170 (DFREACCRQHETSECQRGGLCNFMHAKK) form a C3H1-type 2 zinc finger. Positions 194-216 (EMKKEPNSDSTNRWVSVTAERKN) are disordered.

In terms of assembly, forms a heterodimer with the U2AF large subunit. Can also form a homodimer. U2AF large subunit (U2AF59), U2AF small subunit (U2AF23) and SF1 (bpb1) interact to form a complex required for complex A formation. Interacts with cwf13.

The protein resides in the nucleus. Necessary for the splicing of pre-mRNA. The SF1-U2AF59-U2AF23 complex has a role in the recognition of the branch site (5'-UACUAAC-3'), the pyrimidine tract and the 3'-splice site at the 3'-end of introns. The sequence is that of Splicing factor U2AF 23 kDa subunit from Schizosaccharomyces pombe (strain 972 / ATCC 24843) (Fission yeast).